Reading from the N-terminus, the 215-residue chain is Ras-related protein Rab-5A (215 aa).

GTP-binding residues include Ser29, Ala30, Gly32, Lys33, Ser34, Ser35, His46, Glu47, Thr52, and Gly78. Position 34 (Ser34) interacts with Mg(2+). Short sequence motifs (switch) lie at residues 44–56 and 77–93; these read QFHEFQESTIGAA and AGQERYHSLAPMYYRGA. Residue Thr52 coordinates Mg(2+). A Phosphoserine; by LRRK2 modification is found at Ser84. A (Microbial infection) N-beta-linked (GlcNAc) arginine glycan is attached at Arg120. Residues Asn133, Lys134, Asp136, Ala164, and Lys165 each coordinate GTP. The segment at 181–215 is disordered; sequence LPKNEPQNPGANSARGRGVDLTEPTQPTRNQCCSN. Positions 203 to 215 are enriched in polar residues; sequence EPTQPTRNQCCSN. S-geranylgeranyl cysteine attachment occurs at residues Cys212 and Cys213.

Belongs to the small GTPase superfamily. Rab family. In terms of assembly, interacts with SGSM1 and SGSM3. Interacts with PIK3CB. Interacts with GDI1; this promotes dissociation from membranes; phosphorylation at Ser-84 disrupts this interaction. Interacts with GDI2; phosphorylation at Ser-84 disrupts the interaction. Interacts with EEA1. Interacts with RIN1 and GAPVD1, which regulate its pathway, probably by acting as a GEF. Interacts with RINL. Interacts with ALS2CL, SUN2, ZFYVE20 and RUFY1. Interacts with RABEP1; one RABEP1 homodimer binds two RAB5A chains, but at opposite sides of the dimer. Interacts with OCRL. Interacts with INPP5F. May be a component of a complex composed of RAB5A, DYN2 and PIK3C3. Does not interact with BLOC-3 complex (heterodimer of HPS1 and HPS4). Interacts with CLN5. Interacts with APPL2. Interacts with F8A1/F8A2/F8A3. Found in a complex with F8A1/F8A2/F8A3, HTT and RAB5A; mediates the recruitment of HTT by RAB5A onto early endosomes. Interacts with ATP9A. Interacts with PPP1R21; mediates the recruitment of FERRY complex by RAB5A onto early endosomes. The cofactor is Mg(2+). In terms of processing, phosphorylation of Ser-84 in the switch II region by LRRK2 prevents the association of RAB regulatory proteins, including RAB GDP dissociation inhibitors GDI1 and GDI2. Post-translationally, (Microbial infection) Glycosylated on arginine residues by S.typhimurium protein Ssek3.

The protein localises to the cell membrane. The protein resides in the early endosome membrane. It is found in the melanosome. It localises to the cytoplasmic vesicle. Its subcellular location is the cell projection. The protein localises to the ruffle. The protein resides in the membrane. It is found in the cytoplasm. It localises to the cytosol. Its subcellular location is the phagosome membrane. The protein localises to the endosome membrane. It catalyses the reaction GTP + H2O = GDP + phosphate + H(+). Regulated by guanine nucleotide exchange factors (GEFs) including RINL, which promote the exchange of bound GDP for free GTP. Regulated by GTPase activating proteins (GAPs) which increase the GTP hydrolysis activity. Inhibited by GDP dissociation inhibitors (GDIs). In terms of biological role, the small GTPases Rab are key regulators of intracellular membrane trafficking, from the formation of transport vesicles to their fusion with membranes. Rabs cycle between an inactive GDP-bound form and an active GTP-bound form that is able to recruit to membranes different sets of downstream effectors directly responsible for vesicle formation, movement, tethering and fusion. RAB5A is required for the fusion of plasma membranes and early endosomes. Contributes to the regulation of filopodia extension. Required for the exosomal release of SDCBP, CD63, PDCD6IP and syndecan. Regulates maturation of apoptotic cell-containing phagosomes, probably downstream of DYN2 and PIK3C3. The protein is Ras-related protein Rab-5A of Homo sapiens (Human).